Consider the following 402-residue polypeptide: Centromere protein C (402 aa).

Lys-1 participates in a covalent cross-link: Glycyl lysine isopeptide (Lys-Gly) (interchain with G-Cter in SUMO2). The span at 1-12 (KSEQSSFSSSSS) shows a compositional bias: low complexity. The segment at 1 to 118 (KSEQSSFSSS…HQKSQMSVET (118 aa)) is disordered. Ser-5 is subject to Phosphoserine. Residues 25 to 42 (QKPPAEKTNQSSKNIGKK) carry the Nuclear localization signal motif. Residues 44 to 53 (APFKKQKRAN) are compositionally biased toward basic residues. Residues 88–118 (PNPSGDTGSSKNQDSMAAQNVHQKSQMSVET) are compositionally biased toward polar residues. Lys-186 participates in a covalent cross-link: Glycyl lysine isopeptide (Lys-Gly) (interchain with G-Cter in SUMO2). Thr-193 bears the Phosphothreonine mark. Residues 196–218 (VRRTMRTRSKPLEYWRGERIDYQ) form an MIF2 homology domain II region. 2 positions are modified to phosphoserine: Ser-222 and Ser-232. The short motif at 239–257 (KRKAKGNLGRIITTANRKR) is the Nuclear localization signal element. Lys-266 is covalently cross-linked (Glycyl lysine isopeptide (Lys-Gly) (interchain with G-Cter in SUMO2)). The tract at residues 349 to 402 (LVFYVNLGYLLCTLHETPYIVTTGDSFYVPSGNYYNIKNLLNEERVLLFTQIKS) is MIF2 homology domain III.

It belongs to the CENP-C/MIF2 family. In terms of assembly, oligomer. Component of the CENPA-NAC complex, at least composed of CENPA, CENPC, CENPH, CENPM, CENPN, CENPT and CENPU. The CENPA-NAC complex interacts with the CENPA-CAD complex, composed of CENPI, CENPK, CENPL, CENPO, CENPP, CENPQ, CENPR and CENPS. Binds to DAXX. Interacts with DNMT3B. Interacts directly with CENPA. Identified in a centromere complex containing histones H2A, H2B and H4, and at least CENPA, CENPB, CENPC, CENPT, CENPN, HJURP, SUPT16H, SSRP1 and RSF1. Interacts with MEIKIN.

It is found in the nucleus. It localises to the chromosome. Its subcellular location is the centromere. The protein resides in the kinetochore. Its function is as follows. Component of the CENPA-NAC (nucleosome-associated) complex, a complex that plays a central role in assembly of kinetochore proteins, mitotic progression and chromosome segregation. The CENPA-NAC complex recruits the CENPA-CAD (nucleosome distal) complex and may be involved in incorporation of newly synthesized CENPA into centromeres. CENPC recruits DNA methylation and DNMT3B to both centromeric and pericentromeric satellite repeats and regulates the histone code in these regions. The protein is Centromere protein C (CENPC) of Ovis aries (Sheep).